A 417-amino-acid polypeptide reads, in one-letter code: MGDWSFLGRLLENAQEHSTVIGKVWLTVLFIFRILVLGAAAEEVWGDEQSDFTCNTQQPGCENVCYDRAFPISHIRFWALQIIFVSTPTLIYLGHVLHIVRMEEKKKEREEELLRRDNPQHGRGREPMRTGSPRDPPLRDDRGKVRIAGALLRTYVFNIIFKTLFEVGFIAGQYFLYGFQLQPLYRCDRWPCPNTVDCFISRPTEKTIFVIFMLAVACASLVLNMLEIYHLGWKKLKQGVTNHFNPDASEARHKPLDPLPTATSSGPPSVSIGFPPYYTHPACPTVQAKAIGFPGAPLSPADFTVVTLNDAQGRNHPVKHCNGHHLTTEQNWTRQVAEQQTPASKPSSAASSPDGRKGLIDSSGSSLQESALVVTPEEGEQALATTVEMHSPPLVLLDPGRSSKSSNGRARPGDLAI.

The stretch at 2–15 (GDWSFLGRLLENAQ) is an intramembrane region. The Cytoplasmic portion of the chain corresponds to 16–19 (EHST). A helical membrane pass occupies residues 20–40 (VIGKVWLTVLFIFRILVLGAA). Topologically, residues 41 to 71 (AEEVWGDEQSDFTCNTQQPGCENVCYDRAFP) are extracellular. 3 cysteine pairs are disulfide-bonded: cysteine 54–cysteine 198, cysteine 61–cysteine 192, and cysteine 65–cysteine 187. A helical membrane pass occupies residues 72-92 (ISHIRFWALQIIFVSTPTLIY). Topologically, residues 93 to 158 (LGHVLHIVRM…GALLRTYVFN (66 aa)) are cytoplasmic. Residues 110-128 (EEELLRRDNPQHGRGREPM) show a composition bias toward basic and acidic residues. Residues 110–141 (EEELLRRDNPQHGRGREPMRTGSPRDPPLRDD) are disordered. A helical membrane pass occupies residues 159-179 (IIFKTLFEVGFIAGQYFLYGF). The Extracellular segment spans residues 180–207 (QLQPLYRCDRWPCPNTVDCFISRPTEKT). The helical transmembrane segment at 208–228 (IFVIFMLAVACASLVLNMLEI) threads the bilayer. Residues 229–417 (YHLGWKKLKQ…GRARPGDLAI (189 aa)) are Cytoplasmic-facing. 2 disordered regions span residues 247–267 (DASE…SSGP) and 334–417 (RQVA…DLAI). Residues 342-353 (PASKPSSAASSP) are compositionally biased toward low complexity.

It belongs to the connexin family. Alpha-type (group II) subfamily. A hemichannel or connexon is composed of a hexamer of connexins. A functional gap junction is formed by the apposition of two hemichannels. Forms heteromeric channels with GJA8.

The protein resides in the cell membrane. The protein localises to the cell junction. It localises to the gap junction. In terms of biological role, structural component of lens fiber gap junctions. Gap junctions are dodecameric channels that connect the cytoplasm of adjoining cells. They are formed by the docking of two hexameric hemichannels, one from each cell membrane. Small molecules and ions diffuse from one cell to a neighboring cell via the central pore. This Mus musculus (Mouse) protein is Gap junction alpha-3 protein (Gja3).